The following is a 115-amino-acid chain: Inner membrane protein YidH (115 aa).

Residues 1–30 (MKISRLGEAPDYRFSLANERTFLAWIRTAL) lie on the Cytoplasmic side of the membrane. The helical transmembrane segment at 31-51 (GFLAAGVGLDQLAPDFATPVI) threads the bilayer. Residues 52–53 (RE) are Periplasmic-facing. The helical transmembrane segment at 54-74 (LLALLLCLFSGGLAMYGYLRW) threads the bilayer. The Cytoplasmic portion of the chain corresponds to 75-92 (LRNEKAMRLKEDLPYTNS). Residues 93–113 (LLIISLILMVVAVIVMGLVLY) traverse the membrane as a helical segment. At 114 to 115 (AG) the chain is on the periplasmic side.

This sequence to M.tuberculosis Rv2272.

The protein resides in the cell inner membrane. This chain is Inner membrane protein YidH (yidH), found in Escherichia coli O157:H7.